The following is a 648-amino-acid chain: Serine/threonine-protein kinase PrkC (648 aa).

Residues 1–330 (MLIGKRISGR…KKNGKRKKWP (330 aa)) are Cytoplasmic-facing. The region spanning 11-271 (YQILRVIGGG…DMEADIKTAF (261 aa)) is the Protein kinase domain. ATP contacts are provided by residues 17-25 (IGGGGMANV) and Lys40. Asp134 functions as the Proton acceptor in the catalytic mechanism. Phosphothreonine; by autocatalysis occurs at positions 162, 163, 165, and 167. Ser214 is modified (phosphoserine; by autocatalysis). Residues Thr290, Thr313, and Thr320 each carry the phosphothreonine; by autocatalysis modification. A helical transmembrane segment spans residues 331–351 (WVLLTICLVFITAGILAVTVF). The Extracellular portion of the chain corresponds to 352 to 648 (PSLFMPKDVK…YKTIEYPKDE (297 aa)). PASTA domains are found at residues 356-424 (MPKD…YKST), 425-492 (GKAK…TVSI), and 493-559 (GPED…TFSL).

Belongs to the protein kinase superfamily. Ser/Thr protein kinase family. In terms of assembly, homodimer. Autophosphorylation on threonine residue(s) and serine residue considerably increases the kinase activity of the protein. Dephosphorylated in vitro by PrpC.

It is found in the spore membrane. It carries out the reaction L-seryl-[protein] + ATP = O-phospho-L-seryl-[protein] + ADP + H(+). The catalysed reaction is L-threonyl-[protein] + ATP = O-phospho-L-threonyl-[protein] + ADP + H(+). Bryostatin activates PrkC activity and induces germination, whereas staurosporine inhibits PrkC and significantly reduced peptidoglycan-dependent germination. Kinase activity of isolated N-terminus stimulated by poly-L-lysine or myelin basic protein. Functionally, protein kinase that is responsible for triggering spore germination in response to muropeptides, signaling bacteria to exit dormancy. PrkC is thus a germination receptor that binds peptidoglycan fragments containing m-Dpm (meso-diaminopimelate), which act as spore germinants. Autophosphorylates and phosphorylates EF-G (elongation factor G, fusA); the latter modification is likely necessary for germination in response to peptidoglycan. Another group did not detect phosphorylation of EF-G. PrkC is a substrate in vitro of the cotranscribed phosphatase PrpC, which suggests that they form a functional couple in vivo. Might also be involved in sporulation and biofilm formation. Does not seem to be involved in stress response. The chain is Serine/threonine-protein kinase PrkC (prkC) from Bacillus subtilis (strain 168).